The primary structure comprises 192 residues: Ion-translocating oxidoreductase complex subunit A (192 aa).

The next 6 helical transmembrane spans lie at 5–25, 39–59, 65–85, 102–122, 134–154, and 171–191; these read LLLLISTVLVNNFVLVKFLGL, IGMSMATTFVLTLASILSYLV, LPFDLGYLRTMSFILVIAVVV, ALGIYLPLITTNCAVLGVALL, AIYGFGAAVGFSLVLILFSAM, and AIAMITAGLMSLAFMGFTGLV.

This sequence belongs to the NqrDE/RnfAE family. In terms of assembly, the complex is composed of six subunits: RnfA, RnfB, RnfC, RnfD, RnfE and RnfG.

The protein localises to the cell inner membrane. In terms of biological role, part of a membrane-bound complex that couples electron transfer with translocation of ions across the membrane. This Shewanella sp. (strain MR-4) protein is Ion-translocating oxidoreductase complex subunit A.